Here is a 90-residue protein sequence, read N- to C-terminus: Probable dynein light chain 2, cytoplasmic (90 aa).

It belongs to the dynein light chain family.

It is found in the cytoplasm. The protein localises to the cytoskeleton. Acts as one of several non-catalytic accessory components of a dynein complex. The polypeptide is Probable dynein light chain 2, cytoplasmic (dlc-2) (Caenorhabditis elegans).